Reading from the N-terminus, the 292-residue chain is MADDAGAAGGPGGPGGPGMGGRGGFRGGFGSGIRGRGRGRGRGRGRGRGARGGKAEDKEWLPVTKLGRLVKDMKIKSLEEIYLFSLPIKESEIIDFCLGAALKDEVLKIMPVQKQTRAGQRTRFKAFVAIGDYNGHVGLGLKCSKEVATAIRGAIILAKLSIVPVRRGYWGNKIGKPHTVLCKVTGRCGSLVRLIPAPRGTGIVSAPVPKKLLLMAGIDDCYTSARGCTATLGNFAKATFDAISKTYSYLTPDLWKETVFTKSPYQEFTNHLMKTHTRVSVQRTQAPAVATT.

Positions 1–56 (MADDAGAAGGPGGPGGPGMGGRGGFRGGFGSGIRGRGRGRGRGRGRGRGARGGKAE) are disordered. Alanine 2 is subject to N-acetylalanine. Positions 7 to 34 (AAGGPGGPGGPGMGGRGGFRGGFGSGIR) are enriched in gly residues. Positions 35–51 (GRGRGRGRGRGRGRGAR) are enriched in basic residues. Residues lysine 54 and lysine 58 each participate in a glycyl lysine isopeptide (Lys-Gly) (interchain with G-Cter in ubiquitin) cross-link. The region spanning 102-165 (LKDEVLKIMP…ILAKLSIVPV (64 aa)) is the S5 DRBM domain. Threonine 251 bears the Phosphothreonine mark. Lysine 262 carries the N6-acetyllysine modification. Serine 263 bears the Phosphoserine mark. Position 269 is a phosphothreonine (threonine 269). Lysine 274 is modified (N6-acetyllysine; alternate). Residue lysine 274 forms a Glycyl lysine isopeptide (Lys-Gly) (interchain with G-Cter in SUMO1); alternate linkage. A Glycyl lysine isopeptide (Lys-Gly) (interchain with G-Cter in SUMO2); alternate cross-link involves residue lysine 274. Residue lysine 274 forms a Glycyl lysine isopeptide (Lys-Gly) (interchain with G-Cter in ubiquitin); alternate linkage. Serine 280 carries the post-translational modification Phosphoserine.

This sequence belongs to the universal ribosomal protein uS5 family. Component of the small ribosomal subunit. Interacts with zinc finger protein ZNF277 (via zinc-finger domains); the interaction is direct; the interaction is extra-ribosomal. Interaction with ZNF277 competes with the binding of RPS2 to protein arginine methyltransferase PRMT3. In terms of processing, citrullinated by PADI4 in the Arg/Gly-rich region. Post-translationally, asymmetric arginine dimethylation by PRMT3 occurs at multiple sites in the Arg/Gly-rich region. Monoubiquitinated at Lys-54 and Lys-58 by RNF10 when a ribosome has stalled during translation, leading to its degradation by the proteasome. Deubiquitinated at Lys-54 and Lys-58 by USP10, preventing degradation by the proteasome and promoting 40S ribosome subunit recycling following ribosome dissociation.

It is found in the cytoplasm. The protein resides in the nucleus. Its subcellular location is the nucleolus. Its function is as follows. Component of the ribosome, a large ribonucleoprotein complex responsible for the synthesis of proteins in the cell. The small ribosomal subunit (SSU) binds messenger RNAs (mRNAs) and translates the encoded message by selecting cognate aminoacyl-transfer RNA (tRNA) molecules. The large subunit (LSU) contains the ribosomal catalytic site termed the peptidyl transferase center (PTC), which catalyzes the formation of peptide bonds, thereby polymerizing the amino acids delivered by tRNAs into a polypeptide chain. The nascent polypeptides leave the ribosome through a tunnel in the LSU and interact with protein factors that function in enzymatic processing, targeting, and the membrane insertion of nascent chains at the exit of the ribosomal tunnel. Plays a role in the assembly and function of the 40S ribosomal subunit. The polypeptide is Small ribosomal subunit protein uS5 (RPS2) (Oryctolagus cuniculus (Rabbit)).